The following is a 358-amino-acid chain: DNA integrity scanning protein DisA (358 aa).

The 139-residue stretch at 6 to 144 (RPTLREAVAR…RGERHVLTDS (139 aa)) folds into the DAC domain. ATP-binding positions include Gly-73, Leu-91, and 104-108 (TRHRS).

This sequence belongs to the DisA family. In terms of assembly, homooctamer. Mg(2+) is required as a cofactor.

The enzyme catalyses 2 ATP = 3',3'-c-di-AMP + 2 diphosphate. In terms of biological role, participates in a DNA-damage check-point. DisA forms globular foci that rapidly scan along the chromosomes searching for lesions. Functionally, also has diadenylate cyclase activity, catalyzing the condensation of 2 ATP molecules into cyclic di-AMP (c-di-AMP). c-di-AMP likely acts as a signaling molecule that may couple DNA integrity with a cellular process. The polypeptide is DNA integrity scanning protein DisA (Mycobacterium bovis (strain ATCC BAA-935 / AF2122/97)).